The following is an 863-amino-acid chain: Leucine--tRNA ligase (863 aa).

The 'HIGH' region motif lies at 42 to 53 (PYPSGSGLHVGH). Positions 635–639 (KMSKS) match the 'KMSKS' region motif. K638 provides a ligand contact to ATP.

This sequence belongs to the class-I aminoacyl-tRNA synthetase family.

The protein localises to the cytoplasm. It carries out the reaction tRNA(Leu) + L-leucine + ATP = L-leucyl-tRNA(Leu) + AMP + diphosphate. This is Leucine--tRNA ligase from Salinibacter ruber (strain DSM 13855 / M31).